Reading from the N-terminus, the 285-residue chain is Eukaryotic translation initiation factor 3 subunit F-2 (285 aa).

The region spanning 11–145 (VVLQPLVLFQ…TRLYCGVEMG (135 aa)) is the MPN domain.

It belongs to the eIF-3 subunit F family. In terms of assembly, component of the eukaryotic translation initiation factor 3 (eIF-3) complex. The eIF-3 complex interacts with pix.

The protein resides in the cytoplasm. Its function is as follows. Component of the eukaryotic translation initiation factor 3 (eIF-3) complex, which is involved in protein synthesis of a specialized repertoire of mRNAs and, together with other initiation factors, stimulates binding of mRNA and methionyl-tRNAi to the 40S ribosome. The eIF-3 complex specifically targets and initiates translation of a subset of mRNAs involved in cell proliferation. This chain is Eukaryotic translation initiation factor 3 subunit F-2, found in Drosophila ananassae (Fruit fly).